The primary structure comprises 416 residues: Isobutyryl-CoA dehydrogenase, mitochondrial (416 aa).

The N-terminal 21 residues, 1 to 21 (MISGLFKLSNKQSVLQNATKL), are a transit peptide targeting the mitochondrion. FAD-binding positions include 156–165 (YCLTEPGSGS) and 189–191 (FIS). Serine 165 provides a ligand contact to substrate. Residue 273 to 276 (NGGR) participates in substrate binding. FAD is bound by residues arginine 301, 311 to 312 (FQ), and 370 to 374 (QLFGG). Glutamate 397 acts as the Proton acceptor in catalysis. 399 to 401 (SDA) lines the FAD pocket. Arginine 409 serves as a coordination point for substrate.

It belongs to the acyl-CoA dehydrogenase family. Homotetramer. It depends on FAD as a cofactor.

The protein localises to the mitochondrion. The enzyme catalyses 2-methylpropanoyl-CoA + oxidized [electron-transfer flavoprotein] + H(+) = 2-methylpropenoyl-CoA + reduced [electron-transfer flavoprotein]. It catalyses the reaction (2S)-2-methylbutanoyl-CoA + oxidized [electron-transfer flavoprotein] + H(+) = (2E)-2-methylbut-2-enoyl-CoA + reduced [electron-transfer flavoprotein]. It carries out the reaction propanoyl-CoA + oxidized [electron-transfer flavoprotein] + H(+) = acryloyl-CoA + reduced [electron-transfer flavoprotein]. It functions in the pathway amino-acid degradation; L-valine degradation. Its function is as follows. Isobutyryl-CoA dehydrogenase which catalyzes one of the steps of the valine catabolic pathway. To a lesser extent, is also able to catalyze the oxidation of (2S)-2-methylbutanoyl-CoA. The chain is Isobutyryl-CoA dehydrogenase, mitochondrial (acad8) from Dictyostelium discoideum (Social amoeba).